The chain runs to 642 residues: Threonine--tRNA ligase (642 aa).

The TGS domain occupies 1–61 (MPVITLPDGS…ETDAELSIIT (61 aa)). The interval 243 to 534 (DHRKIGKQLD…LIEEYAGRFP (292 aa)) is catalytic. Zn(2+)-binding residues include Cys334, His385, and His511.

This sequence belongs to the class-II aminoacyl-tRNA synthetase family. Homodimer. Requires Zn(2+) as cofactor.

It is found in the cytoplasm. The catalysed reaction is tRNA(Thr) + L-threonine + ATP = L-threonyl-tRNA(Thr) + AMP + diphosphate + H(+). In terms of biological role, catalyzes the attachment of threonine to tRNA(Thr) in a two-step reaction: L-threonine is first activated by ATP to form Thr-AMP and then transferred to the acceptor end of tRNA(Thr). Also edits incorrectly charged L-seryl-tRNA(Thr). The polypeptide is Threonine--tRNA ligase (Shewanella sp. (strain ANA-3)).